The chain runs to 241 residues: Acetoacetyl-CoA reductase (241 aa).

Residues 12-14 and 82-86 contribute to the NADP(+) site; these read RGI and NAGIT. Substrate-binding positions include Asp88 and 141 to 144; that span reads QMGQ. Tyr147 (proton acceptor) is an active-site residue. 177 to 180 contacts NADP(+); the sequence is PGYI. Substrate is bound at residue 178–179; that stretch reads GY.

This sequence belongs to the short-chain dehydrogenases/reductases (SDR) family.

The protein resides in the cytoplasm. It catalyses the reaction a (3R)-3-hydroxyacyl-CoA + NADP(+) = a 3-oxoacyl-CoA + NADPH + H(+). It participates in biopolymer metabolism; poly-(R)-3-hydroxybutanoate biosynthesis. In Shinella zoogloeoides (Crabtreella saccharophila), this protein is Acetoacetyl-CoA reductase.